The sequence spans 384 residues: Guanine nucleotide-binding protein alpha-1 subunit (384 aa).

The interval 1–22 is disordered; the sequence is MGSLCSRNKHYSQADDEENTQT. Gly-2 carries the N-myristoyl glycine lipid modification. Cys-5 is lipidated: S-palmitoyl cysteine. Positions 38–384 constitute a G-alpha domain; sequence HIQKLLLLGA…RRNLFEAGLL (347 aa). Residues 41-54 form a G1 motif region; it reads KLLLLGAGDSGKST. Residues Asp-49, Ser-50, Gly-51, Lys-52, Ser-53, Thr-54, Asp-163, Leu-188, Thr-194, Gly-222, Asn-288, Lys-289, Asp-291, and Ala-356 each coordinate GTP. Ser-53 is a Mg(2+) binding site. The tract at residues 186-194 is G2 motif; the sequence is DVLFARIRT. Thr-194 serves as a coordination point for Mg(2+). Positions 215 to 224 are G3 motif; sequence YRLFDVGGQR. A G4 motif region spans residues 284-291; it reads MLFLNKFD. Residues 354–359 are G5 motif; sequence TTALDQ.

Belongs to the G-alpha family. G proteins are composed of 3 units; alpha, beta and gamma. The alpha chain contains the guanine nucleotide binding site. Mg(2+) is required as a cofactor.

Functionally, guanine nucleotide-binding proteins (G proteins) are involved as modulators or transducers in various transmembrane signaling systems. This chain is Guanine nucleotide-binding protein alpha-1 subunit (GPA1), found in Solanum lycopersicum (Tomato).